The following is a 451-amino-acid chain: UPF0210 protein NMB1652 (451 aa).

This sequence belongs to the UPF0210 family. Homodimer.

The polypeptide is UPF0210 protein NMB1652 (Neisseria meningitidis serogroup B (strain ATCC BAA-335 / MC58)).